A 497-amino-acid polypeptide reads, in one-letter code: Probable FAD-binding monooxygenase AlmA (497 aa).

The helical transmembrane segment at 4-24 threads the bilayer; the sequence is QVDVLIIGAGISGIGLAVHLS. FAD-binding residues include Ser15, Glu36, Asp56, Phe62, and Val104. Position 54–56 (54–56) interacts with NADP(+); it reads RSD. NADP(+) is bound by residues 184-190, 208-209, and 292-293; these read SGATAIT, RS, and RL. Val395 is an FAD binding site.

This sequence belongs to the FAD-binding monooxygenase family. FAD serves as cofactor.

Its subcellular location is the cell membrane. It participates in hydrocarbon metabolism; alkane degradation. Functionally, is involved in the degradation of n-alkanes with C chain lengths of 32 and longer. Allows Acinetobacter sp. strain DSM 17874 to grow on long-chain n-alkanes such as dotriacontane (C32H66) or hexatriacontane (C36H74) as a sole carbon source. This is Probable FAD-binding monooxygenase AlmA from Acinetobacter sp.